The primary structure comprises 399 residues: Tryptophan synthase beta chain (399 aa).

Position 92 is an N6-(pyridoxal phosphate)lysine (lysine 92).

Belongs to the TrpB family. Tetramer of two alpha and two beta chains. The cofactor is pyridoxal 5'-phosphate.

It catalyses the reaction (1S,2R)-1-C-(indol-3-yl)glycerol 3-phosphate + L-serine = D-glyceraldehyde 3-phosphate + L-tryptophan + H2O. Its pathway is amino-acid biosynthesis; L-tryptophan biosynthesis; L-tryptophan from chorismate: step 5/5. Functionally, the beta subunit is responsible for the synthesis of L-tryptophan from indole and L-serine. This is Tryptophan synthase beta chain from Nitrosomonas eutropha (strain DSM 101675 / C91 / Nm57).